The chain runs to 237 residues: Ribose-5-phosphate isomerase A (237 aa).

Residues 30–33, 87–90, and 100–103 each bind substrate; these read SGST, DGAD, and KGGG. Glutamate 109 functions as the Proton acceptor in the catalytic mechanism. Lysine 127 serves as a coordination point for substrate.

It belongs to the ribose 5-phosphate isomerase family. As to quaternary structure, homodimer.

The enzyme catalyses aldehydo-D-ribose 5-phosphate = D-ribulose 5-phosphate. It functions in the pathway carbohydrate degradation; pentose phosphate pathway; D-ribose 5-phosphate from D-ribulose 5-phosphate (non-oxidative stage): step 1/1. In terms of biological role, catalyzes the reversible conversion of ribose-5-phosphate to ribulose 5-phosphate. The sequence is that of Ribose-5-phosphate isomerase A from Synechococcus sp. (strain RCC307).